A 395-amino-acid chain; its full sequence is Putative 8-amino-7-oxononanoate synthase (395 aa).

Substrate is bound at residue arginine 23. Residue 110–111 (GY) coordinates pyridoxal 5'-phosphate. Residue histidine 135 coordinates substrate. Pyridoxal 5'-phosphate-binding positions include serine 182, 207–210 (DEAH), and 239–242 (TFSK). Lysine 242 carries the post-translational modification N6-(pyridoxal phosphate)lysine. Substrate is bound at residue threonine 356.

Belongs to the class-II pyridoxal-phosphate-dependent aminotransferase family. BioF subfamily. As to quaternary structure, homodimer. Pyridoxal 5'-phosphate is required as a cofactor.

The catalysed reaction is 6-carboxyhexanoyl-[ACP] + L-alanine + H(+) = (8S)-8-amino-7-oxononanoate + holo-[ACP] + CO2. Its pathway is cofactor biosynthesis; biotin biosynthesis. Functionally, catalyzes the decarboxylative condensation of pimeloyl-[acyl-carrier protein] and L-alanine to produce 8-amino-7-oxononanoate (AON), [acyl-carrier protein], and carbon dioxide. The protein is Putative 8-amino-7-oxononanoate synthase (bioF) of Bacillus mycoides (strain KBAB4) (Bacillus weihenstephanensis).